We begin with the raw amino-acid sequence, 411 residues long: 2-acylphloroglucinol 4-prenyltransferase, chloroplastic (411 aa).

A chloroplast-targeting transit peptide spans 1 to 91 (MELSSVSSFS…CNDQRGNSIR (91 aa)). Helical transmembrane passes span 159–179 (LLGMLAILGSCFYTAGINQIF), 198–218 (ISVESAWLLTLSPAIIGFILI), 226–246 (LLTSLYCLAILSGTIYSVPPF), 253–273 (ITAFLCILMIHAGLNFSVYYA), 278–298 (LGLAFAWSPSFSFITAFITFM), 333–353 (LLGTGLLLLNYVAAISTAIIW), 356–376 (AFKSNIMLLSHAILAFSLIFQ), and 391–411 (KSFYEFIWILFSAEYVVYLFI).

Belongs to the UbiA prenyltransferase family. Mg(2+) serves as cofactor. Expressed in glandular trichomes called lupulin glands, and in early stage and mature cones. Detected in leaves, but not in root, stem and first stage of flowers. No expression in male flowers.

Its subcellular location is the plastid. It is found in the chloroplast membrane. It catalyses the reaction a 2-acylphloroglucinol + dimethylallyl diphosphate = a 2-acyl-4-prenylphloroglucinol + diphosphate. The protein operates within secondary metabolite biosynthesis. In terms of biological role, involved in the biosynthesis of prenylated phenolics natural products which contribute to the bitter taste of beer and display broad biological activities. Catalyzes the first prenylation step in the beta-bitter acid pathway. Abble to transfer dimethylallyl diphosphate (DMAPP) or geranyl diphosphate (GPP) to phlorisovalerophenone (PIVP), phlorisobutrylphenone (PIMP) and naringenin chalcone. Can also use phlorisobutyrophenone (PIBP) and phlormethylbutanophenone (PMBP) as substrates, but not 6'-O-methylated chalcone or naringenin. This chain is 2-acylphloroglucinol 4-prenyltransferase, chloroplastic, found in Humulus lupulus (European hop).